A 100-amino-acid chain; its full sequence is Large ribosomal subunit protein uL23 (100 aa).

This sequence belongs to the universal ribosomal protein uL23 family. In terms of assembly, part of the 50S ribosomal subunit. Contacts protein L29, and trigger factor when it is bound to the ribosome.

In terms of biological role, one of the early assembly proteins it binds 23S rRNA. One of the proteins that surrounds the polypeptide exit tunnel on the outside of the ribosome. Forms the main docking site for trigger factor binding to the ribosome. The polypeptide is Large ribosomal subunit protein uL23 (Thermotoga sp. (strain RQ2)).